Reading from the N-terminus, the 205-residue chain is dITP/XTP pyrophosphatase (205 aa).

Substrate is bound at residue 10-15; sequence TKNEGK. 2 residues coordinate Mg(2+): E44 and D73. The active-site Proton acceptor is D73. Substrate-binding positions include S74, 156 to 159, K179, and 184 to 185; these read FGYD and HR.

The protein belongs to the HAM1 NTPase family. As to quaternary structure, homodimer. Mg(2+) is required as a cofactor.

The enzyme catalyses XTP + H2O = XMP + diphosphate + H(+). It catalyses the reaction dITP + H2O = dIMP + diphosphate + H(+). The catalysed reaction is ITP + H2O = IMP + diphosphate + H(+). Its function is as follows. Pyrophosphatase that catalyzes the hydrolysis of nucleoside triphosphates to their monophosphate derivatives, with a high preference for the non-canonical purine nucleotides XTP (xanthosine triphosphate), dITP (deoxyinosine triphosphate) and ITP. Seems to function as a house-cleaning enzyme that removes non-canonical purine nucleotides from the nucleotide pool, thus preventing their incorporation into DNA/RNA and avoiding chromosomal lesions. The polypeptide is dITP/XTP pyrophosphatase (Dictyoglomus thermophilum (strain ATCC 35947 / DSM 3960 / H-6-12)).